A 316-amino-acid chain; its full sequence is MASCVVKNWQGETVGSAELSLKVARPETAAHILYLALRRQMTNARQGNAHTKTRAEVRGGGRKPWKQKGTGRARAGSIRSPLWRKGGVIFGPRKREYNLAMNRKERQLALRTALQSRVEDLIVVEDFQEQLNPPKTRAVAQALLRWGVMEDQSALLIVAERSEAVERAVRNIARVKLIGLDQINVFDLLNVDWVLITVSALEQLKARWGSDAAPAVLETPSEDAPQADIAEDQALPGDGPEDQAVPESEHEEAEQTPAQPEAQENQAALQGRPADPQGPEEQTEEPQDPAEELAQGAEPSTVEEAETAPAEEESDD.

A large ribosomal subunit protein uL4 region spans residues 1-211 (MASCVVKNWQ…EQLKARWGSD (211 aa)). Disordered stretches follow at residues 44–76 (ARQG…ARAG) and 231–316 (EDQA…ESDD). Residues 60–71 (GGRKPWKQKGTG) show a composition bias toward basic residues. The tract at residues 212–316 (AAPAVLETPS…TAPAEEESDD (105 aa)) is unknown. Low complexity predominate over residues 255–270 (QTPAQPEAQENQAALQ). 2 stretches are compositionally biased toward acidic residues: residues 281–291 (EQTEEPQDPAE) and 301–316 (TVEE…ESDD).

Belongs to the universal ribosomal protein uL4 family. Part of the 50S ribosomal subunit.

Its function is as follows. One of the primary rRNA binding proteins, this protein initially binds near the 5'-end of the 23S rRNA. It is important during the early stages of 50S assembly. It makes multiple contacts with different domains of the 23S rRNA in the assembled 50S subunit and ribosome. In terms of biological role, forms part of the polypeptide exit tunnel. This is Large ribosomal subunit protein uL4 from Synechococcus sp. (strain JA-2-3B'a(2-13)) (Cyanobacteria bacterium Yellowstone B-Prime).